The following is a 598-amino-acid chain: Aspartate--tRNA(Asp/Asn) ligase (598 aa).

Glu-174 contacts L-aspartate. Positions 198–201 (QQLK) are aspartate. Arg-220 provides a ligand contact to L-aspartate. ATP is bound by residues 220–222 (RDE) and Gln-229. Residue His-458 coordinates L-aspartate. ATP is bound at residue Glu-492. Arg-499 contributes to the L-aspartate binding site. Residue 544 to 547 (GIDR) coordinates ATP.

The protein belongs to the class-II aminoacyl-tRNA synthetase family. Type 1 subfamily. As to quaternary structure, homodimer.

The protein resides in the cytoplasm. The enzyme catalyses tRNA(Asx) + L-aspartate + ATP = L-aspartyl-tRNA(Asx) + AMP + diphosphate. Its function is as follows. Aspartyl-tRNA synthetase with relaxed tRNA specificity since it is able to aspartylate not only its cognate tRNA(Asp) but also tRNA(Asn). Reaction proceeds in two steps: L-aspartate is first activated by ATP to form Asp-AMP and then transferred to the acceptor end of tRNA(Asp/Asn). The polypeptide is Aspartate--tRNA(Asp/Asn) ligase (Dehalococcoides mccartyi (strain CBDB1)).